The sequence spans 299 residues: CCR4-NOT transcription complex subunit 9 (299 aa).

Position 1 is an N-acetylmethionine (Met1).

This sequence belongs to the CNOT9 family. As to quaternary structure, homodimer. Component of the CCR4-NOT complex; distinct complexes seem to exist that differ in the participation of probably mutually exclusive catalytic subunits. Interacts with MYB, ATF2, RARA, RARB, RARG, RXRA, RXRB and RXRG. Identified in a complex with ATF2 bound to target DNA. Interacts with NANOS2. Directly interacts with ZNF335.

It is found in the nucleus. The protein localises to the cytoplasm. The protein resides in the P-body. Functionally, component of the CCR4-NOT complex which is one of the major cellular mRNA deadenylases and is linked to various cellular processes including bulk mRNA degradation, miRNA-mediated repression, translational repression during translational initiation and general transcription regulation. Additional complex functions may be a consequence of its influence on mRNA expression. Involved in down-regulation of MYB- and JUN-dependent transcription. Enhances ligand-dependent transcriptional activity of nuclear hormone receptors. May play a role in cell differentiation. This is CCR4-NOT transcription complex subunit 9 from Bos taurus (Bovine).